A 364-amino-acid polypeptide reads, in one-letter code: Probable dual-specificity RNA methyltransferase RlmN (364 aa).

The active-site Proton acceptor is the Glu-106. Residues 112–350 form the Radical SAM core domain; it reads YPQRNTVCIS…SCTVRDTRGR (239 aa). Cys-119 and Cys-356 form a disulfide bridge. Residues Cys-126, Cys-130, and Cys-133 each contribute to the [4Fe-4S] cluster site. S-adenosyl-L-methionine contacts are provided by residues 177-178, Ser-211, 234-236, and Asn-313; these read GE and SLH. Catalysis depends on Cys-356, which acts as the S-methylcysteine intermediate.

Belongs to the radical SAM superfamily. RlmN family. [4Fe-4S] cluster is required as a cofactor.

The protein localises to the cytoplasm. It catalyses the reaction adenosine(2503) in 23S rRNA + 2 reduced [2Fe-2S]-[ferredoxin] + 2 S-adenosyl-L-methionine = 2-methyladenosine(2503) in 23S rRNA + 5'-deoxyadenosine + L-methionine + 2 oxidized [2Fe-2S]-[ferredoxin] + S-adenosyl-L-homocysteine. The catalysed reaction is adenosine(37) in tRNA + 2 reduced [2Fe-2S]-[ferredoxin] + 2 S-adenosyl-L-methionine = 2-methyladenosine(37) in tRNA + 5'-deoxyadenosine + L-methionine + 2 oxidized [2Fe-2S]-[ferredoxin] + S-adenosyl-L-homocysteine. Specifically methylates position 2 of adenine 2503 in 23S rRNA and position 2 of adenine 37 in tRNAs. This chain is Probable dual-specificity RNA methyltransferase RlmN, found in Mycobacterium marinum (strain ATCC BAA-535 / M).